Reading from the N-terminus, the 166-residue chain is Cytochrome c-type biogenesis protein CcmE (166 aa).

Residues 1–7 lie on the Cytoplasmic side of the membrane; that stretch reads MTRKQKR. The chain crosses the membrane as a helical; Signal-anchor for type II membrane protein span at residues 8 to 28; that stretch reads LALIASGAVVVSLAVGLVMFA. Over 29–166 the chain is Periplasmic; sequence LRDNIVFFYS…QTAPQGAQAY (138 aa). The heme site is built by histidine 122 and tyrosine 126. The tract at residues 139–166 is disordered; sequence GVWQEEGKSEGKPSAIPAQTAPQGAQAY.

This sequence belongs to the CcmE/CycJ family.

The protein localises to the cell inner membrane. Its function is as follows. Heme chaperone required for the biogenesis of c-type cytochromes. Transiently binds heme delivered by CcmC and transfers the heme to apo-cytochromes in a process facilitated by CcmF and CcmH. This chain is Cytochrome c-type biogenesis protein CcmE, found in Methylocella silvestris (strain DSM 15510 / CIP 108128 / LMG 27833 / NCIMB 13906 / BL2).